The following is a 108-amino-acid chain: Putative bolA-like protein K11H12.1 (108 aa).

The tract at residues 89–108 (SKWDGQKQEDSPTCRGGFGK) is disordered.

This sequence belongs to the BolA/IbaG family.

The polypeptide is Putative bolA-like protein K11H12.1 (Caenorhabditis elegans).